The following is a 388-amino-acid chain: Beta-1,4-galactosyltransferase 5 (388 aa).

The Cytoplasmic portion of the chain corresponds to 1-14; that stretch reads MRARRGLLRLPRRS. A helical; Signal-anchor for type II membrane protein membrane pass occupies residues 15-35; it reads LLAALFFFSLSSSLLYFVYVA. At 36–388 the chain is on the lumenal side; that stretch reads PGIVNTYLFM…TPELAQVTEY (353 aa). N-linked (GlcNAc...) asparagine glycosylation is found at Asn77, Asn81, Asn90, and Asn128. The cysteines at positions 114 and 158 are disulfide-linked. UDP-alpha-D-galactose is bound by residues 169–173, 208–210, 235–236, Tyr264, and Trp296; these read PFRNR, FNR, and VD. The cysteines at positions 229 and 248 are disulfide-linked. Asp236 serves as a coordination point for Mn(2+). 298-301 contacts N-acetyl-D-glucosamine; the sequence is GEDD. A Mn(2+)-binding site is contributed by His329. 329–330 lines the UDP-alpha-D-galactose pocket; it reads HH. Arg340 lines the N-acetyl-D-glucosamine pocket. N-linked (GlcNAc...) asparagine glycans are attached at residues Asn360, Asn364, and Asn373.

The protein belongs to the glycosyltransferase 7 family. Mn(2+) is required as a cofactor. Highest levels in heart, brain, liver and kidney with lower levels in spleen, lung and testis.

It localises to the golgi apparatus. Its subcellular location is the golgi stack membrane. The enzyme catalyses a beta-D-glucosyl-(1&lt;-&gt;1')-N-acylsphing-4-enine + UDP-alpha-D-galactose = a beta-D-Gal-(1-&gt;4)-beta-D-Glc-(1&lt;-&gt;1)-Cer(d18:1(4E)) + UDP + H(+). The protein operates within protein modification; protein glycosylation. Its pathway is sphingolipid metabolism. Catalyzes the synthesis of lactosylceramide (LacCer) via the transfer of galactose from UDP-galactose to glucosylceramide (GlcCer). LacCer is the starting point in the biosynthesis of all gangliosides (membrane-bound glycosphingolipids) which play pivotal roles in the CNS including neuronal maturation and axonal and myelin formation. Plays a role in the glycosylation of BMPR1A and regulation of its protein stability. Essential for extraembryonic development during early embryogenesis. This is Beta-1,4-galactosyltransferase 5 from Mus musculus (Mouse).